Consider the following 374-residue polypeptide: MATDTAVTGAPETMQLRLASGNGPVTRTVLRTPLRDALPSEVPLIDISPIFSTSVADRKAVACKIHDAATNIGFFYIQNHRVPSRDTDMAYSASLDFFRQDMEAKMKADAKKGPFDSGYRGPGTQRVNPDEGADLRETYSILYDPMLDPTVPDPARIPEPASRFLHLGRAPFESTDTLPHFKDAFVRYFQACLALARALTRTFALSLDLPESAFDSKVQYPDASLEINFYPPISTGHAVSAPADPDTRVSIGSHTDFLLFTILWQDSNGGLQVLNREGQWIRASPVEGTFVVNIGDYLQRITNDKYVSTVHRAQNWSGRQRVSMPFFWGFGMHESCQVLESCCGEDGKSKYDEVRCVDWVSRRLGNLFDLSDKG.

Residues 111–131 (KKGPFDSGYRGPGTQRVNPDE) form a disordered region. The Fe2OG dioxygenase domain maps to 220–330 (YPDASLEINF…RVSMPFFWGF (111 aa)). Histidine 254, aspartate 256, and histidine 311 together coordinate Fe cation. Position 321 (arginine 321) interacts with 2-oxoglutarate.

This sequence belongs to the iron/ascorbate-dependent oxidoreductase family. Requires Fe(2+) as cofactor.

The enzyme catalyses peramine + 2-oxoglutarate + O2 = 8-hydroxyperamine + succinate + CO2. It participates in secondary metabolite biosynthesis. In terms of biological role, 2-oxoglutarate-Fe(II) type oxidoreductase; part of the gene cluster that mediates the biosynthesis of pyrrolopyrazines, secondary metabolites showing insecticidal activity. Within the pathway, ppzC uses peramine as substrate for hydroxylation to yield the novel analog 8-hydroxyperamine. The single multifunctional NRPS ppzA is sufficient to produce peramine via condensation of 1-pyrroline-5-carboxylate and arginine, N-methylation of the alpha-amino group of arginine and reduction of the thioester and the cyclization to form an iminium ion resulting in release from the peptide synthetase. Deprotonation of this intermediate and oxidation of the pyrroline ring would give rise to peramine. In Epichloe species that produce only peramine, the peramine synthetase gene is not localized in a gene cluster, in contrast to Metarhizium species that contain additional pyrrolopyrazine biosynthesis genes. The 2-oxoglutarate-Fe(II) type oxidoreductase ppzC hydroxylates peramine to yield the newly identified compound 8-hydroxyperamine whereas ppzD converts L-proline into trans-4-hydroxy-L-proline, a precursor of peramine biosynthesis. The chain is 2-oxoglutarate-Fe(II) type oxidoreductase ppzC (ppzC) from Metarhizium majus (strain ARSEF 297).